The following is a 255-amino-acid chain: tRNA (guanine-N(1)-)-methyltransferase (255 aa).

S-adenosyl-L-methionine contacts are provided by residues G113 and 133–138; that span reads IGDYVL.

It belongs to the RNA methyltransferase TrmD family. In terms of assembly, homodimer.

The protein resides in the cytoplasm. The enzyme catalyses guanosine(37) in tRNA + S-adenosyl-L-methionine = N(1)-methylguanosine(37) in tRNA + S-adenosyl-L-homocysteine + H(+). Its function is as follows. Specifically methylates guanosine-37 in various tRNAs. This Enterobacter sp. (strain 638) protein is tRNA (guanine-N(1)-)-methyltransferase.